A 24-amino-acid chain; its full sequence is Protein YahV (24 aa).

Residues 4–24 (ILLNVLNIVFIGIAIILVIIC) traverse the membrane as a helical segment.

It is found in the cell inner membrane. The sequence is that of Protein YahV from Escherichia coli (strain K12).